We begin with the raw amino-acid sequence, 250 residues long: Biosynthetic peptidoglycan transglycosylase (250 aa).

A helical transmembrane segment spans residues 15 to 35; that stretch reads AVLLFFVSSLGFVLLYRFVPV.

It belongs to the glycosyltransferase 51 family.

The protein localises to the cell inner membrane. It catalyses the reaction [GlcNAc-(1-&gt;4)-Mur2Ac(oyl-L-Ala-gamma-D-Glu-L-Lys-D-Ala-D-Ala)](n)-di-trans,octa-cis-undecaprenyl diphosphate + beta-D-GlcNAc-(1-&gt;4)-Mur2Ac(oyl-L-Ala-gamma-D-Glu-L-Lys-D-Ala-D-Ala)-di-trans,octa-cis-undecaprenyl diphosphate = [GlcNAc-(1-&gt;4)-Mur2Ac(oyl-L-Ala-gamma-D-Glu-L-Lys-D-Ala-D-Ala)](n+1)-di-trans,octa-cis-undecaprenyl diphosphate + di-trans,octa-cis-undecaprenyl diphosphate + H(+). Its pathway is cell wall biogenesis; peptidoglycan biosynthesis. In terms of biological role, peptidoglycan polymerase that catalyzes glycan chain elongation from lipid-linked precursors. This is Biosynthetic peptidoglycan transglycosylase from Bdellovibrio bacteriovorus (strain ATCC 15356 / DSM 50701 / NCIMB 9529 / HD100).